Consider the following 416-residue polypeptide: E3 ubiquitin-protein ligase DMA1 (416 aa).

The disordered stretch occupies residues 1-30; it reads MSTNTVPSSPPNQTPPAASGIATSHDHTKF. Glycyl lysine isopeptide (Lys-Gly) (interchain with G-Cter in ubiquitin) cross-links involve residues Lys150, Lys204, Lys217, Lys237, Lys240, Lys260, Lys300, Lys306, Lys313, and Lys317. One can recognise an FHA domain in the interval 189–252; sequence IIIGRYTERV…SGTFLNHQRL (64 aa). The RING-type zinc finger occupies 327-371; that stretch reads CSICLNKIKPCQAIFISPCAHSWHFHCVRRLVIMNYPQFMCPNCR.

This sequence belongs to the DMA1 family. As to quaternary structure, interacts with CDC123. Interacts with PCL1. In terms of processing, UBC4-dependent autoubiquitination occurs at Lys-150, Lys-204, Lys-217, Lys-237, Lys-240, Lys-260, Lys-300, Lys-306, Lys-313 and Lys-317. UBC4-dependent autoubiquitination is responsible for DMA2 turnover. UBC13/MMS2-dependent autoubiquitination occurs at Lys-237 and Lys-306. Lys-204 and Lys-306 are also ubiquitinated in trans by DMA2 E3 ligase in association with UBC4.

Its subcellular location is the cytoplasm. The catalysed reaction is S-ubiquitinyl-[E2 ubiquitin-conjugating enzyme]-L-cysteine + [acceptor protein]-L-lysine = [E2 ubiquitin-conjugating enzyme]-L-cysteine + N(6)-ubiquitinyl-[acceptor protein]-L-lysine.. E3 ubiquitin-protein ligase which functions in cell cycle retarding in conjunction with the UBC4 and UBC13/MMS2 complex, 2 E2 ubiquitin conjugating enzymes. Involved in nutritional control of the cell cycle. Targets the G1 cyclin PCL1 for destruction. Required for proper spindle positioning, likely regulating septin ring deposition at the bud neck. This is E3 ubiquitin-protein ligase DMA1 from Saccharomyces cerevisiae (strain ATCC 204508 / S288c) (Baker's yeast).